Here is a 371-residue protein sequence, read N- to C-terminus: Queuine tRNA-ribosyltransferase (371 aa).

The Proton acceptor role is filled by Asp-90. Substrate-binding positions include 90 to 94 (DSGGF), Asp-144, Gln-189, and Gly-215. The interval 246 to 252 (GVGTPEN) is RNA binding. The Nucleophile role is filled by Asp-265. An RNA binding; important for wobble base 34 recognition region spans residues 270–274 (TRNAR). Positions 303, 305, 308, and 334 each coordinate Zn(2+).

It belongs to the queuine tRNA-ribosyltransferase family. In terms of assembly, homodimer. Within each dimer, one monomer is responsible for RNA recognition and catalysis, while the other monomer binds to the replacement base PreQ1. It depends on Zn(2+) as a cofactor.

The catalysed reaction is 7-aminomethyl-7-carbaguanine + guanosine(34) in tRNA = 7-aminomethyl-7-carbaguanosine(34) in tRNA + guanine. Its pathway is tRNA modification; tRNA-queuosine biosynthesis. Functionally, catalyzes the base-exchange of a guanine (G) residue with the queuine precursor 7-aminomethyl-7-deazaguanine (PreQ1) at position 34 (anticodon wobble position) in tRNAs with GU(N) anticodons (tRNA-Asp, -Asn, -His and -Tyr). Catalysis occurs through a double-displacement mechanism. The nucleophile active site attacks the C1' of nucleotide 34 to detach the guanine base from the RNA, forming a covalent enzyme-RNA intermediate. The proton acceptor active site deprotonates the incoming PreQ1, allowing a nucleophilic attack on the C1' of the ribose to form the product. After dissociation, two additional enzymatic reactions on the tRNA convert PreQ1 to queuine (Q), resulting in the hypermodified nucleoside queuosine (7-(((4,5-cis-dihydroxy-2-cyclopenten-1-yl)amino)methyl)-7-deazaguanosine). The protein is Queuine tRNA-ribosyltransferase of Helicobacter pylori (strain HPAG1).